The following is a 253-amino-acid chain: 5-oxoprolinase subunit A (253 aa).

It belongs to the LamB/PxpA family. In terms of assembly, forms a complex composed of PxpA, PxpB and PxpC.

It carries out the reaction 5-oxo-L-proline + ATP + 2 H2O = L-glutamate + ADP + phosphate + H(+). In terms of biological role, catalyzes the cleavage of 5-oxoproline to form L-glutamate coupled to the hydrolysis of ATP to ADP and inorganic phosphate. The polypeptide is 5-oxoprolinase subunit A (Bacillus licheniformis (strain ATCC 14580 / DSM 13 / JCM 2505 / CCUG 7422 / NBRC 12200 / NCIMB 9375 / NCTC 10341 / NRRL NRS-1264 / Gibson 46)).